Here is a 409-residue protein sequence, read N- to C-terminus: Glycosaminoglycan xylosylkinase (409 aa).

The Cytoplasmic portion of the chain corresponds to 1–6 (MKLKQR). Residues 7–25 (VVLLAILLVIFIFTKVFLI) form a helical; Signal-anchor for type II membrane protein membrane-spanning segment. Residues 26 to 409 (DNLDTSAANR…VEDRMPLSHL (384 aa)) lie on the Lumenal side of the membrane. Residues Q107 and K123 each contribute to the ATP site. Residue D142 coordinates Mn(2+). N-linked (GlcNAc...) asparagine glycosylation occurs at N193. Disulfide bonds link C196-C211 and C201-C204. Position 222-225 (222-225 (TLWL)) interacts with ATP. 2 cysteine pairs are disulfide-bonded: C257-C331 and C332-C389. The active site involves D289. ATP-binding residues include E294 and D309. Mn(2+) is bound at residue D309.

Belongs to the FAM20 family. Requires Mn(2+) as cofactor. In terms of tissue distribution, widely expressed. Strongly expressed in pancreas, spleen and fetal liver.

Its subcellular location is the golgi apparatus membrane. It carries out the reaction 3-O-(beta-D-galactosyl-(1-&gt;3)-beta-D-galactosyl-(1-&gt;4)-beta-D-xylosyl)-L-seryl-[protein] + ATP = 3-O-(beta-D-galactosyl-(1-&gt;3)-beta-D-galactosyl-(1-&gt;4)-beta-D-2-O-phosphoxylosyl)-L-seryl-[protein] + ADP + H(+). Responsible for the 2-O-phosphorylation of xylose in the glycosaminoglycan-protein linkage region of proteoglycans thereby regulating the amount of mature GAG chains. Sulfated glycosaminoglycans (GAGs), including heparan sulfate and chondroitin sulfate, are synthesized on the so-called common GAG-protein linkage region (GlcUAbeta1-3Galbeta1-3Galbeta1-4Xylbeta1-O-Ser) of core proteins, which is formed by the stepwise addition of monosaccharide residues by the respective specific glycosyltransferases. Xylose 2-O-phosphorylation may influence the catalytic activity of B3GAT3 (GlcAT-I) which completes the precursor tetrasaccharide of GAG-protein linkage regions on which the repeating disaccharide region is synthesized. The polypeptide is Glycosaminoglycan xylosylkinase (Homo sapiens (Human)).